A 495-amino-acid chain; its full sequence is Protein adenylyltransferase Fic (495 aa).

Positions 1 to 27 are disordered; the sequence is MGTEAEQPSPPSPPAQQQEQTNPPLWN. A helical transmembrane segment spans residues 36-55; sequence LYRLVLFFIAGSLAAWTIHA. TPR repeat units lie at residues 121-154 and 155-189; these read ALVS…APRH and PEVL…SPSN. The Inhibitory (S/T)XXXE(G/N) motif motif lies at 246-251; the sequence is SVGIEG. ATP is bound by residues E250 and 331 to 334; that span reads VGGH. The Fido domain maps to 300–435; sequence ITIKDILELH…IRPFVRFIAD (136 aa). The active site involves H378. Residues 382 to 389, 414 to 415, and N422 contribute to the ATP site; these read DGNGRTSR and YY.

Belongs to the fic family. As to quaternary structure, homodimer.

It localises to the membrane. The enzyme catalyses L-tyrosyl-[protein] + ATP = O-(5'-adenylyl)-L-tyrosyl-[protein] + diphosphate. It catalyses the reaction L-threonyl-[protein] + ATP = 3-O-(5'-adenylyl)-L-threonyl-[protein] + diphosphate. The catalysed reaction is 3-O-(5'-adenylyl)-L-threonyl-[protein] + H2O = L-threonyl-[protein] + AMP + H(+). Its activity is regulated as follows. The side chain of Glu-250 determines which of the two opposing activities (AMPylase or de-AMPylase) will take place. In response to endoplasmic reticulum stress, mediates de-AMPylase activity. Adenylyltransferase activity is inhibited by the inhibitory helix present at the N-terminus: Glu-250 binds ATP and competes with ATP-binding at Arg-389, thereby preventing adenylyltransferase activity. In unstressed cells, disengagement of Glu-250 promotes adenylyltransferase activity. Activation dissociates ATP-binding from Glu-250, allowing ordered binding of the entire ATP moiety with the alpha-phosphate in an orientation that is productive for accepting an incoming target hydroxyl side chain. In terms of biological role, protein that can both mediate the addition of adenosine 5'-monophosphate (AMP) to specific residues of target proteins (AMPylation), and the removal of the same modification from target proteins (de-AMPylation), depending on the context. The side chain of Glu-250 determines which of the two opposing activities (AMPylase or de-AMPylase) will take place. Acts as a key regulator of the unfolded protein response (UPR) by mediating AMPylation or de-AMPylation of Hsc70-3/BiP. In unstressed cells, acts as an adenylyltransferase by mediating AMPylation of Hsc70-3/BiP at 'Thr-518', thereby inactivating it. In response to endoplasmic reticulum stress, acts as a phosphodiesterase by mediating removal of ATP (de-AMPylation) from Hsc70-3/BiP at 'Thr-518', leading to restore HSPA5/BiP activity. The sequence is that of Protein adenylyltransferase Fic from Drosophila yakuba (Fruit fly).